Here is a 201-residue protein sequence, read N- to C-terminus: MYEYIRGQFQGISKDYVVIELNNIGYKIFTSGNTMSNMPKVGEEVLLYLEQIVREDFIGLYGFTTREELEMFKLLLSINGVGAKAALSLLSISTVNNLKYAIMMGDEKHITRAPGIGKKTAQRIILELKDKLKPDELTSEEGELIEGINDNSDYSFNINETLSALMALGYTEKEAQKALEKVDKTLSIENMIKESLKLLMR.

The tract at residues 1–64 is domain I; it reads MYEYIRGQFQ…EDFIGLYGFT (64 aa). Positions 65–143 are domain II; sequence TREELEMFKL…PDELTSEEGE (79 aa). The flexible linker stretch occupies residues 144-152; that stretch reads LIEGINDNS. The segment at 153–201 is domain III; sequence DYSFNINETLSALMALGYTEKEAQKALEKVDKTLSIENMIKESLKLLMR.

It belongs to the RuvA family. As to quaternary structure, homotetramer. Forms an RuvA(8)-RuvB(12)-Holliday junction (HJ) complex. HJ DNA is sandwiched between 2 RuvA tetramers; dsDNA enters through RuvA and exits via RuvB. An RuvB hexamer assembles on each DNA strand where it exits the tetramer. Each RuvB hexamer is contacted by two RuvA subunits (via domain III) on 2 adjacent RuvB subunits; this complex drives branch migration. In the full resolvosome a probable DNA-RuvA(4)-RuvB(12)-RuvC(2) complex forms which resolves the HJ.

The protein localises to the cytoplasm. Functionally, the RuvA-RuvB-RuvC complex processes Holliday junction (HJ) DNA during genetic recombination and DNA repair, while the RuvA-RuvB complex plays an important role in the rescue of blocked DNA replication forks via replication fork reversal (RFR). RuvA specifically binds to HJ cruciform DNA, conferring on it an open structure. The RuvB hexamer acts as an ATP-dependent pump, pulling dsDNA into and through the RuvAB complex. HJ branch migration allows RuvC to scan DNA until it finds its consensus sequence, where it cleaves and resolves the cruciform DNA. This is Holliday junction branch migration complex subunit RuvA from Clostridium perfringens (strain ATCC 13124 / DSM 756 / JCM 1290 / NCIMB 6125 / NCTC 8237 / Type A).